The sequence spans 363 residues: Dihydroorotate dehydrogenase (quinone) (363 aa).

FMN contacts are provided by residues 67–71 and threonine 91; that span reads AGLDK. Lysine 71 contributes to the substrate binding site. 116–120 lines the substrate pocket; that stretch reads NRMGF. The FMN site is built by asparagine 145 and asparagine 178. Asparagine 178 contributes to the substrate binding site. Serine 181 functions as the Nucleophile in the catalytic mechanism. Residue asparagine 183 participates in substrate binding. Residues lysine 219 and threonine 247 each coordinate FMN. 248–249 serves as a coordination point for substrate; that stretch reads NT. Residues glycine 268, glycine 297, and 318 to 319 contribute to the FMN site; that span reads YT.

It belongs to the dihydroorotate dehydrogenase family. Type 2 subfamily. As to quaternary structure, monomer. Requires FMN as cofactor.

The protein localises to the cell membrane. The enzyme catalyses (S)-dihydroorotate + a quinone = orotate + a quinol. It functions in the pathway pyrimidine metabolism; UMP biosynthesis via de novo pathway; orotate from (S)-dihydroorotate (quinone route): step 1/1. Its function is as follows. Catalyzes the conversion of dihydroorotate to orotate with quinone as electron acceptor. The polypeptide is Dihydroorotate dehydrogenase (quinone) (Myxococcus xanthus (strain DK1622)).